Reading from the N-terminus, the 234-residue chain is Ribose-5-phosphate isomerase A (234 aa).

Substrate-binding positions include 34–37 (TGST), 90–93 (DGAD), and 103–106 (KGGG). The active-site Proton acceptor is E112. K130 contacts substrate.

It belongs to the ribose 5-phosphate isomerase family. Homodimer.

The catalysed reaction is aldehydo-D-ribose 5-phosphate = D-ribulose 5-phosphate. Its pathway is carbohydrate degradation; pentose phosphate pathway; D-ribose 5-phosphate from D-ribulose 5-phosphate (non-oxidative stage): step 1/1. In terms of biological role, catalyzes the reversible conversion of ribose-5-phosphate to ribulose 5-phosphate. The sequence is that of Ribose-5-phosphate isomerase A from Methanosarcina acetivorans (strain ATCC 35395 / DSM 2834 / JCM 12185 / C2A).